The following is a 344-amino-acid chain: Anthranilate phosphoribosyltransferase (344 aa).

5-phospho-alpha-D-ribose 1-diphosphate-binding positions include glycine 84, 87–88 (GD), threonine 92, 94–97 (NIST), 112–120 (KHGNRSVSS), and serine 124. Position 84 (glycine 84) interacts with anthranilate. A Mg(2+)-binding site is contributed by serine 96. Anthranilate is bound at residue asparagine 115. Arginine 170 lines the anthranilate pocket. Mg(2+) contacts are provided by aspartate 229 and glutamate 230.

This sequence belongs to the anthranilate phosphoribosyltransferase family. In terms of assembly, homodimer. Requires Mg(2+) as cofactor.

It catalyses the reaction N-(5-phospho-beta-D-ribosyl)anthranilate + diphosphate = 5-phospho-alpha-D-ribose 1-diphosphate + anthranilate. The protein operates within amino-acid biosynthesis; L-tryptophan biosynthesis; L-tryptophan from chorismate: step 2/5. Catalyzes the transfer of the phosphoribosyl group of 5-phosphorylribose-1-pyrophosphate (PRPP) to anthranilate to yield N-(5'-phosphoribosyl)-anthranilate (PRA). This Xylella fastidiosa (strain M23) protein is Anthranilate phosphoribosyltransferase.